Reading from the N-terminus, the 259-residue chain is UPF0246 protein SG0407 (259 aa).

The protein belongs to the UPF0246 family.

This Sodalis glossinidius (strain morsitans) protein is UPF0246 protein SG0407.